Consider the following 389-residue polypeptide: Type II methyltransferase M2.BsuMI (389 aa).

An SAM-dependent MTase C5-type domain is found at 1-299 (MKVVSLFSGI…ENLSQPKGSI (299 aa)). Cysteine 69 is a catalytic residue.

It belongs to the class I-like SAM-binding methyltransferase superfamily. C5-methyltransferase family. Monomer. May form a complex with YdiP, also seems to be active alone.

It carries out the reaction a 2'-deoxycytidine in DNA + S-adenosyl-L-methionine = a 5-methyl-2'-deoxycytidine in DNA + S-adenosyl-L-homocysteine + H(+). Somewhat inhibited by MgCl(2) and spermidine, strongly inhibited by MnCl(2). A methylase, recognizes the double-stranded sequence 5'-YTCGAR-3', methylates C-3 on both strands, and protects the DNA from cleavage by the BsuMI endonuclease. The polypeptide is Type II methyltransferase M2.BsuMI (ydiP) (Bacillus subtilis (strain 168)).